Reading from the N-terminus, the 556-residue chain is Glutamine--tRNA ligase (556 aa).

Residues Pro-39–His-49 carry the 'HIGH' region motif. ATP contacts are provided by residues Glu-40–Asn-42 and His-46–Ser-52. Positions 72 and 217 each coordinate L-glutamine. Residues Thr-236 and Arg-267–Leu-268 each bind ATP. Positions Leu-274–Arg-278 match the 'KMSKS' region motif.

This sequence belongs to the class-I aminoacyl-tRNA synthetase family. In terms of assembly, monomer.

It is found in the cytoplasm. The catalysed reaction is tRNA(Gln) + L-glutamine + ATP = L-glutaminyl-tRNA(Gln) + AMP + diphosphate. The protein is Glutamine--tRNA ligase of Haemophilus ducreyi (strain 35000HP / ATCC 700724).